The primary structure comprises 94 residues: Small ribosomal subunit protein uS19 (94 aa).

This sequence belongs to the universal ribosomal protein uS19 family.

Protein S19 forms a complex with S13 that binds strongly to the 16S ribosomal RNA. The protein is Small ribosomal subunit protein uS19 of Moorella thermoacetica (strain ATCC 39073 / JCM 9320).